A 390-amino-acid polypeptide reads, in one-letter code: GTPase Obg (390 aa).

The Obg domain occupies 1 to 159 (MKFVDEASIL…RDLLLELMLL (159 aa)). Residues 127-147 (NTRFKSSVNRTPRQKTNGTPG) are disordered. Residues 129–145 (RFKSSVNRTPRQKTNGT) are compositionally biased toward polar residues. The OBG-type G domain occupies 160 to 333 (ADVGMLGMPN…LCWDVMTFII (174 aa)). GTP is bound by residues 166–173 (GMPNAGKS), 191–195 (FTTLV), 213–216 (DIPG), 283–286 (NKID), and 314–316 (SAA). Mg(2+) contacts are provided by S173 and T193.

It belongs to the TRAFAC class OBG-HflX-like GTPase superfamily. OBG GTPase family. Monomer. Requires Mg(2+) as cofactor.

The protein resides in the cytoplasm. Its function is as follows. An essential GTPase which binds GTP, GDP and possibly (p)ppGpp with moderate affinity, with high nucleotide exchange rates and a fairly low GTP hydrolysis rate. Plays a role in control of the cell cycle, stress response, ribosome biogenesis and in those bacteria that undergo differentiation, in morphogenesis control. The chain is GTPase Obg from Salmonella gallinarum (strain 287/91 / NCTC 13346).